We begin with the raw amino-acid sequence, 409 residues long: Arginine biosynthesis bifunctional protein ArgJ (409 aa).

Residues threonine 157, lysine 183, threonine 194, glutamate 281, asparagine 404, and serine 409 each contribute to the substrate site. Residue threonine 194 is the Nucleophile of the active site.

The protein belongs to the ArgJ family. As to quaternary structure, heterotetramer of two alpha and two beta chains.

The protein localises to the cytoplasm. It carries out the reaction N(2)-acetyl-L-ornithine + L-glutamate = N-acetyl-L-glutamate + L-ornithine. The enzyme catalyses L-glutamate + acetyl-CoA = N-acetyl-L-glutamate + CoA + H(+). It functions in the pathway amino-acid biosynthesis; L-arginine biosynthesis; L-ornithine and N-acetyl-L-glutamate from L-glutamate and N(2)-acetyl-L-ornithine (cyclic): step 1/1. The protein operates within amino-acid biosynthesis; L-arginine biosynthesis; N(2)-acetyl-L-ornithine from L-glutamate: step 1/4. Functionally, catalyzes two activities which are involved in the cyclic version of arginine biosynthesis: the synthesis of N-acetylglutamate from glutamate and acetyl-CoA as the acetyl donor, and of ornithine by transacetylation between N(2)-acetylornithine and glutamate. The sequence is that of Arginine biosynthesis bifunctional protein ArgJ from Zymomonas mobilis subsp. mobilis (strain ATCC 31821 / ZM4 / CP4).